A 209-amino-acid chain; its full sequence is Ribosomal RNA small subunit methyltransferase G (209 aa).

Residues Gly-71, Phe-76, 122–123, and Arg-135 contribute to the S-adenosyl-L-methionine site; that span reads AE.

This sequence belongs to the methyltransferase superfamily. RNA methyltransferase RsmG family.

Its subcellular location is the cytoplasm. Its function is as follows. Specifically methylates the N7 position of a guanine in 16S rRNA. The polypeptide is Ribosomal RNA small subunit methyltransferase G (Flavobacterium psychrophilum (strain ATCC 49511 / DSM 21280 / CIP 103535 / JIP02/86)).